A 55-amino-acid chain; its full sequence is Eclosion hormone (55 aa).

The protein belongs to the insect eclosion hormone family.

It is found in the secreted. Neuropeptide that triggers the performance of ecdysis behaviors at the end of a molt. It triggers adult behavior patterns: larval, pupal and adult ecdysis, and plasticization during the molt. This is Eclosion hormone from Romalea microptera (Eastern lubber grasshopper).